The primary structure comprises 459 residues: Zinc finger and BTB domain-containing protein 9 (459 aa).

The BTB domain occupies 48 to 112 (CDVSLLVQGR…IYSGSLHLPL (65 aa)). Positions 178-189 (VRSSASTENSVL) are enriched in polar residues. Disordered regions lie at residues 178–200 (VRSS…EGSE) and 212–274 (EEEE…ASQI). Residues Lys-285, Lys-293, and Lys-368 each participate in a glycyl lysine isopeptide (Lys-Gly) (interchain with G-Cter in SUMO2) cross-link. The interval 293–356 (KEKTKVLSGE…GGTGQAMHGP (64 aa)) is disordered. A C2H2-type 1 zinc finger spans residues 397 to 419 (FGCGICNKRFKLKHHLTEHMKTH). The segment at 424 to 446 (HACPHCGRRFRVQAFFLRHRDLC) adopts a C2H2-type 2; atypical zinc-finger fold.

The protein localises to the nucleus. May be involved in transcriptional regulation. This chain is Zinc finger and BTB domain-containing protein 9 (Zbtb9), found in Mus musculus (Mouse).